The primary structure comprises 404 residues: Probable homogentisate phytyltransferase 1, chloroplastic (404 aa).

The N-terminal 77 residues, 1 to 77 (MDSLRLRPSL…SHHRIPHRPT (77 aa)), are a transit peptide targeting the chloroplast. The tract at residues 68–96 (SHHRIPHRPTSSSADASGQPLQSSAEAHD) is disordered. The span at 76–92 (PTSSSADASGQPLQSSA) shows a compositional bias: polar residues. A run of 9 helical transmembrane segments spans residues 119–139 (TVIG…ENLS), 144–164 (LFLT…IYIV), 184–204 (LASG…FAAM), 216–238 (PLFL…LPFL), 245–265 (VVAA…AFFL), 282–302 (LIFA…FKDI), 325–345 (VFWI…LMGA), 348–368 (ACLW…AILW), and 382–402 (ITSF…LIPL).

This sequence belongs to the UbiA prenyltransferase family.

The protein localises to the plastid. It localises to the chloroplast thylakoid membrane. It catalyses the reaction phytyl diphosphate + homogentisate + H(+) = 2-methyl-6-phytyl-1,4-benzene-1,4-diol + CO2 + diphosphate. The protein operates within cofactor biosynthesis; tocopherol biosynthesis. Functionally, involved in the synthesis of tocopherol (vitamin E). Catalyzes the condensation of homogentisate and phytyl diphosphate to form dimethylphytylhydroquinone. The sequence is that of Probable homogentisate phytyltransferase 1, chloroplastic (HPT1) from Oryza sativa subsp. japonica (Rice).